The primary structure comprises 484 residues: AMP nucleosidase (484 aa).

This sequence belongs to the AMP nucleosidase family.

It carries out the reaction AMP + H2O = adenine + D-ribose 5-phosphate. Its function is as follows. Catalyzes the hydrolysis of the N-glycosidic bond of AMP to form adenine and ribose 5-phosphate. Involved in regulation of AMP concentrations. The chain is AMP nucleosidase from Escherichia coli O157:H7.